The following is a 118-amino-acid chain: MVARVWSLMRFLIKGSVAGGAVYLVYDQELLGPSDKSQAALQKAGEVVPPAVYQFSQYVCQQTGLQIPQLPAPPKIYFPIRDSWNAGIMTVMSALSVAPSKAREYSKEGWEYVKARTK.

At 1-7 (MVARVWS) the chain is on the mitochondrial matrix side. Residues 8 to 26 (LMRFLIKGSVAGGAVYLVY) traverse the membrane as a helical segment. Topologically, residues 27–118 (DQELLGPSDK…GWEYVKARTK (92 aa)) are mitochondrial intermembrane.

This sequence belongs to the MICOS complex subunit Mic13 family. As to quaternary structure, component of the mitochondrial contact site and cristae organizing system (MICOS) complex, composed of at least MICOS10/MIC10, CHCHD3/MIC19, CHCHD6/MIC25, APOO/MIC26, MICOS13/MIC13, APOOL/MIC27 and IMMT/MIC60. The complex associates with mitochondrial outer membrane proteins SAMM50, MTX1 and MTX2, and with HSPA9.

The protein localises to the mitochondrion inner membrane. Its function is as follows. Component of the MICOS complex, a large protein complex of the mitochondrial inner membrane that plays crucial roles in the maintenance of crista junctions, inner membrane architecture, and formation of contact sites to the outer membrane. Constituent of mature MICOS complex, it is required for the formation of cristae junction (CJ) and maintenance of cristae morphology. Required for the incorporation of MICOS10/MIC10 into the MICOS complex. This is MICOS complex subunit MIC13 from Macaca fascicularis (Crab-eating macaque).